The primary structure comprises 651 residues: MAAAAATAVGPGAGSAGVAGPGGAGPCATVSVFPGARLLTIGDANGEIQRHAEQQALRLEVRAGPDAAGIALYSHEDVCVFKCSVSRETECSRVGRQSFIITLGCNSVLIQFATPHDFCSFYNILKTCRGHTLERSVFSERTEESSAVQYFQFYGYLSQQQNMMQDYVRTGTYQRAILQNHTDFKDKIVLDVGCGSGILSFFAAQAGARKIYAVEASTMAQHAEVLVKSNNLTDRIVVIPGKVEEVSLPEQVDIIISEPMGYMLFNERMLESYLHAKKYLKPSGNMFPTIGDVHLAPFTDEQLYMEQFTKANFWYQPSFHGVDLSALRGAAVDEYFRQPVVDTFDIRILMAKSVKYTVNFLEAKEGDLHRIEIPFKFHMLHSGLVHGLAFWFDVAFIGSIMTVWLSTAPTEPLTHWYQVRCLFQSPLFAKAGDTLSGTCLLIANKRQSYDISIVAQVDQTGSKSSNLLDLKNPFFRYTGTTPSPPPGSHYTSPSENMWNTGSTYNLSSGVAVAGMPTAYDLSSVIAGGSSVGHNNLIPLANTGIVNHTHSRMGSIMSTGIVQGNRVAGPWAGDLPPGLRTRSSYQWGPGRLRGHAGSSVPMTCPTGSSGAQGGGGSSSAHYAVNNQFTMGGPAISMASPMSIPTNTMHYGS.

Residues 28–139 (ATVSVFPGAR…GHTLERSVFS (112 aa)) are interaction with C9orf72. Residues 147 to 454 (AVQYFQFYGY…KRQSYDISIV (308 aa)) enclose the SAM-dependent MTase PRMT-type domain. The S-adenosyl-L-methionine site is built by Gln-160, Arg-169, Gly-193, and Glu-215. Ser-217 bears the Phosphoserine mark. Lys-228 participates in a covalent cross-link: Glycyl lysine isopeptide (Lys-Gly) (interchain with G-Cter in ubiquitin). The S-adenosyl-L-methionine site is built by Glu-244 and Ser-272. The tract at residues 347 to 380 (RILMAKSVKYTVNFLEAKEGDLHRIEIPFKFHML) is required for nuclear translocation. The transactivation domain stretch occupies residues 500–651 (TGSTYNLSSG…IPTNTMHYGS (152 aa)). Arg-551 is subject to Dimethylated arginine. Residues 581 to 617 (RSSYQWGPGRLRGHAGSSVPMTCPTGSSGAQGGGGSS) form a disordered region.

This sequence belongs to the class I-like SAM-binding methyltransferase superfamily. Protein arginine N-methyltransferase family. As to quaternary structure, homodimer. Interacts with NR1H4. Interacts with SNRPC. Interacts with the C-terminus of NCOA2/GRIP1, NCO3/ACTR and NCOA1/SRC1. Part of a complex consisting of CARM1, EP300/P300 and NCOA2/GRIP1. Interacts with FLII, TP53, myogenic factor MEF2, EP300/P300, TRIM24, CREBBP and CTNNB1. Interacts with RELA. Identified in a complex containing CARM1, TRIM24 and NCOA2/GRIP1. Interacts with NCOA3/SRC3. Interacts with SKP2. Interacts (via PH domain-like fold) with C9orf72. Interacts with PARP1; promoting PARP1 recruimtent to replication forks. In terms of processing, auto-methylated on Arg-551. Methylation enhances transcription coactivator activity. Methylation is required for its role in the regulation of pre-mRNA alternative splicing. Phosphorylation at Ser-217 interferes with S-adenosyl-L-methionine binding and strongly reduces methyltransferase activity. Phosphorylation at Ser-217 is strongly increased during mitosis, and decreases rapidly to a very low, basal level after entry into the G1 phase of the cell cycle. Phosphorylation at Ser-217 may promote location in the cytosol. Post-translationally, ubiquitinated by E3 ubiquitin-protein ligase complex containing FBXO9 at Lys-228; leading to proteasomal degradation. As to expression, isoform 1 is expressed at low levels in brain, liver and testis. Isoform 2 is highly expressed in brain, liver, skeletal muscle and testis. In terms of tissue distribution, isoform 3 is highly expressed in spleen, liver and kidney. As to expression, isoform 4 is expressed in spleen, liver and kidney.

It is found in the nucleus. The protein localises to the cytoplasm. It localises to the chromosome. The enzyme catalyses L-arginyl-[protein] + 2 S-adenosyl-L-methionine = N(omega),N(omega)-dimethyl-L-arginyl-[protein] + 2 S-adenosyl-L-homocysteine + 2 H(+). Methylation of H3R17 (H3R17me) by CARM1 is stimulated by preacetylation of H3 'Lys-18' (H3K18ac) H3 'Lys-23' (H3K23ac) by EP300 and blocked by citrullination of H3 'Arg-17' (H3R17ci) by PADI4. Methylates (mono- and asymmetric dimethylation) the guanidino nitrogens of arginyl residues in several proteins involved in DNA packaging, transcription regulation, pre-mRNA splicing, and mRNA stability. Recruited to promoters upon gene activation together with histone acetyltransferases from EP300/P300 and p160 families, methylates histone H3 at 'Arg-17' (H3R17me), forming mainly asymmetric dimethylarginine (H3R17me2a), leading to activation of transcription via chromatin remodeling. During nuclear hormone receptor activation and TCF7L2/TCF4 activation, acts synergically with EP300/P300 and either one of the p160 histone acetyltransferases NCOA1/SRC1, NCOA2/GRIP1 and NCOA3/ACTR or CTNNB1/beta-catenin to activate transcription. During myogenic transcriptional activation, acts together with NCOA3/ACTR as a coactivator for MEF2C. During monocyte inflammatory stimulation, acts together with EP300/P300 as a coactivator for NF-kappa-B. Acts as a coactivator for PPARG, promotes adipocyte differentiation and the accumulation of brown fat tissue. Plays a role in the regulation of pre-mRNA alternative splicing by methylation of splicing factors. Also seems to be involved in p53/TP53 transcriptional activation. Methylates EP300/P300, both at 'Arg-2142', which may loosen its interaction with NCOA2/GRIP1, and at 'Arg-580' and 'Arg-604' in the KIX domain, which impairs its interaction with CREB and inhibits CREB-dependent transcriptional activation. Also methylates arginine residues in RNA-binding proteins PABPC1, ELAVL1 and ELAV4, which may affect their mRNA-stabilizing properties and the half-life of their target mRNAs. Acts as a transcriptional coactivator of ACACA/acetyl-CoA carboxylase by enriching H3R17 methylation at its promoter, thereby positively regulating fatty acid synthesis. Independently of its methyltransferase activity, involved in replication fork progression: promotes PARP1 recruitment to replication forks, leading to poly-ADP-ribosylation of chromatin at replication forks and reduced fork speed. Functionally, isoform 3 specifically affects pre-mRNA splicing. This activity is independent from methyltransferase activity. The sequence is that of Histone-arginine methyltransferase CARM1 (Carm1) from Rattus norvegicus (Rat).